Consider the following 206-residue polypeptide: Large ribosomal subunit protein uL4 (206 aa).

Residues 48–75 are disordered; it reads TQSAKTRAEVSGGGIKPWRQKGTGRARQ.

The protein belongs to the universal ribosomal protein uL4 family. Part of the 50S ribosomal subunit.

In terms of biological role, one of the primary rRNA binding proteins, this protein initially binds near the 5'-end of the 23S rRNA. It is important during the early stages of 50S assembly. It makes multiple contacts with different domains of the 23S rRNA in the assembled 50S subunit and ribosome. Functionally, forms part of the polypeptide exit tunnel. The chain is Large ribosomal subunit protein uL4 from Clostridium botulinum (strain Loch Maree / Type A3).